The primary structure comprises 319 residues: MSLNFLDFEQPIAELEAKIDSLTAVSRQDEKLDINLDEEVQRLREKSVELTRKIFSDLGAWQIAQLARHPRRPYTLDYIANIFTDFEELAGDRAYADDKAIVGGIARLDGRPVMIIGHQKGRETKEKIRRNFGMPAPEGYRKALRLMEMAERFKLPIITFIDTPGAYPGVGAEERGQSEAIARNLREMSRLNVPIVCTVIGEGGSGGALAIGVGDKVNMLQYSTYSVISPEGCASILWKSADKAPLAAEAMGITAHRLKELKMIDSVIPEPLGGAHRDYLAIAASLKAQLLADLSDLDVLNDEELLNRRYQRLMNYGYC.

The region spanning 35–296 is the CoA carboxyltransferase C-terminal domain; the sequence is NLDEEVQRLR…KAQLLADLSD (262 aa).

The protein belongs to the AccA family. Acetyl-CoA carboxylase is a heterohexamer composed of biotin carboxyl carrier protein (AccB), biotin carboxylase (AccC) and two subunits each of ACCase subunit alpha (AccA) and ACCase subunit beta (AccD).

Its subcellular location is the cytoplasm. The enzyme catalyses N(6)-carboxybiotinyl-L-lysyl-[protein] + acetyl-CoA = N(6)-biotinyl-L-lysyl-[protein] + malonyl-CoA. Its pathway is lipid metabolism; malonyl-CoA biosynthesis; malonyl-CoA from acetyl-CoA: step 1/1. Its function is as follows. Component of the acetyl coenzyme A carboxylase (ACC) complex. First, biotin carboxylase catalyzes the carboxylation of biotin on its carrier protein (BCCP) and then the CO(2) group is transferred by the carboxyltransferase to acetyl-CoA to form malonyl-CoA. This is Acetyl-coenzyme A carboxylase carboxyl transferase subunit alpha from Yersinia enterocolitica serotype O:8 / biotype 1B (strain NCTC 13174 / 8081).